A 168-amino-acid chain; its full sequence is TGEKPYSCSDCGKCFTRRWNLSEHRKSHTGQKRFCCSVCGKGFSYHSQMKSHYRTHTGEKPCICSECGKSFTDHAGLRIHQKYHTGVKPFSCSECGKCFTRRSGLTAHLRIHTGEKPYTCTECGKCFTCRTDLARHLRIHTENKPFTCSQCEKSFASHSDLDRHHCLP.

6 consecutive C2H2-type zinc fingers follow at residues 6-28 (YSCSDCGKCFTRRWNLSEHRKSH), 34-56 (FCCSVCGKGFSYHSQMKSHYRTH), 62-84 (CICSECGKSFTDHAGLRIHQKYH), 90-112 (FSCSECGKCFTRRSGLTAHLRIH), 118-140 (YTCTECGKCFTCRTDLARHLRIH), and 146-165 (FTCSQCEKSFASHSDLDRHH).

The protein belongs to the krueppel C2H2-type zinc-finger protein family.

It is found in the nucleus. Functionally, may be involved in transcriptional regulation. The polypeptide is Gastrula zinc finger protein XlCGF42.1 (Xenopus laevis (African clawed frog)).